A 300-amino-acid polypeptide reads, in one-letter code: Glycerol-3-phosphate dehydrogenase [NAD(P)+] (300 aa).

NADPH contacts are provided by tryptophan 11, lysine 33, and lysine 79. The sn-glycerol 3-phosphate site is built by lysine 79, glycine 107, and serine 109. Residue alanine 111 participates in NADPH binding. Positions 161, 214, 224, 225, and 226 each coordinate sn-glycerol 3-phosphate. Lysine 161 functions as the Proton acceptor in the catalytic mechanism. Arginine 225 is a binding site for NADPH. The NADPH site is built by valine 249 and glutamate 251.

The protein belongs to the NAD-dependent glycerol-3-phosphate dehydrogenase family.

Its subcellular location is the cytoplasm. It catalyses the reaction sn-glycerol 3-phosphate + NAD(+) = dihydroxyacetone phosphate + NADH + H(+). It carries out the reaction sn-glycerol 3-phosphate + NADP(+) = dihydroxyacetone phosphate + NADPH + H(+). It functions in the pathway membrane lipid metabolism; glycerophospholipid metabolism. In terms of biological role, catalyzes the reduction of the glycolytic intermediate dihydroxyacetone phosphate (DHAP) to sn-glycerol 3-phosphate (G3P), the key precursor for phospholipid synthesis. This Campylobacter lari (strain RM2100 / D67 / ATCC BAA-1060) protein is Glycerol-3-phosphate dehydrogenase [NAD(P)+].